Here is a 388-residue protein sequence, read N- to C-terminus: Integrase (388 aa).

The Core-binding (CB) domain maps to 70–151 (YTVADAVNDW…CLNRAVKRAM (82 aa)). A Tyr recombinase domain is found at 173-379 (RPSKALTFAQ…VIQTGAVVMD (207 aa)). Catalysis depends on residues Arg208, Lys249, Arg330, and His353. Catalysis depends on Tyr363, which acts as the O-(3'-phospho-DNA)-tyrosine intermediate.

The protein belongs to the 'phage' integrase family.

Functionally, required for integration of pSAM2. The sequence is that of Integrase (int) from Streptomyces ambofaciens.